The following is a 422-amino-acid chain: Tyrosine--tRNA ligase 1 (422 aa).

Tyr-36 contributes to the L-tyrosine binding site. The 'HIGH' region motif lies at 41 to 50 (PTAGSLHIGH). L-tyrosine contacts are provided by Tyr-173 and Gln-177. Positions 233–237 (KFGKT) match the 'KMSKS' region motif. Lys-236 is an ATP binding site. Positions 355-419 (SDVVTLLLET…GKKQFAMVKL (65 aa)) constitute an S4 RNA-binding domain.

This sequence belongs to the class-I aminoacyl-tRNA synthetase family. TyrS type 1 subfamily. As to quaternary structure, homodimer.

Its subcellular location is the cytoplasm. The enzyme catalyses tRNA(Tyr) + L-tyrosine + ATP = L-tyrosyl-tRNA(Tyr) + AMP + diphosphate + H(+). Catalyzes the attachment of tyrosine to tRNA(Tyr) in a two-step reaction: tyrosine is first activated by ATP to form Tyr-AMP and then transferred to the acceptor end of tRNA(Tyr). In Vibrio vulnificus (strain YJ016), this protein is Tyrosine--tRNA ligase 1.